We begin with the raw amino-acid sequence, 109 residues long: Spermidine export protein MdtI (109 aa).

Transmembrane regions (helical) follow at residues 6–26 (WVHA…NVFL), 36–56 (IFGL…SQAV), 64–84 (AYAL…WILF), and 88–108 (LNRK…MVKL).

Belongs to the drug/metabolite transporter (DMT) superfamily. Small multidrug resistance (SMR) (TC 2.A.7.1) family. MdtI subfamily. Forms a complex with MdtJ.

Its subcellular location is the cell inner membrane. Catalyzes the excretion of spermidine. This Escherichia coli O81 (strain ED1a) protein is Spermidine export protein MdtI.